The sequence spans 683 residues: Long-chain-fatty-acid--CoA ligase 5 (683 aa).

Residues 12–32 form a helical; Signal-anchor for type III membrane protein membrane-spanning segment; sequence LPTPALICLLTFGTAIFLWLI. Residues 33 to 683 are Cytoplasmic-facing; the sequence is NRPQPVLPLI…IKSLYESIEE (651 aa). Lys-361 is subject to N6-acetyllysine.

Belongs to the ATP-dependent AMP-binding enzyme family. In terms of tissue distribution, expressed most abundantly in the small intestine, and to a much lesser extent in the lung, liver, adrenal gland, adipose tissue and kidney.

The protein localises to the mitochondrion. It is found in the endoplasmic reticulum. It localises to the mitochondrion outer membrane. Its subcellular location is the endoplasmic reticulum membrane. The protein resides in the cell membrane. It catalyses the reaction a long-chain fatty acid + ATP + CoA = a long-chain fatty acyl-CoA + AMP + diphosphate. The catalysed reaction is (5Z,8Z,11Z,14Z)-eicosatetraenoate + ATP + CoA = (5Z,8Z,11Z,14Z)-eicosatetraenoyl-CoA + AMP + diphosphate. It carries out the reaction 15-hydroxy-(5Z,8Z,11Z,13E)-eicosatetraenoate + ATP + CoA = 15-hydroxy-(5Z,8Z,11Z,13E)-eicosatetraenoyl-CoA + AMP + diphosphate. The enzyme catalyses 12-hydroxy-(5Z,8Z,10E,14Z)-eicosatetraenoate + ATP + CoA = 12-hydroxy-(5Z,8Z,10E,14Z)-eicosatetraenoyl-CoA + AMP + diphosphate. It catalyses the reaction 5-hydroxy-(6E,8Z,11Z,14Z)-eicosatetraenoate + ATP + CoA = 5-hydroxy-(6E,8Z,11Z,14Z)-eicosatetraenoyl-CoA + AMP + diphosphate. The catalysed reaction is 14,15-epoxy-(5Z,8Z,11Z)-eicosatrienoate + ATP + CoA = 14,15-epoxy-(5Z,8Z,11Z)-eicosatrienoyl-CoA + AMP + diphosphate. It carries out the reaction 11,12-epoxy-(5Z,8Z,14Z)-eicosatrienoate + ATP + CoA = 11,12-epoxy-(5Z,8Z,14Z)-eicosatrienoyl-CoA + AMP + diphosphate. The enzyme catalyses hexadecanoate + ATP + CoA = hexadecanoyl-CoA + AMP + diphosphate. It catalyses the reaction (E)-hexadec-2-enoate + ATP + CoA = (2E)-hexadecenoyl-CoA + AMP + diphosphate. The catalysed reaction is (9Z)-octadecenoate + ATP + CoA = (9Z)-octadecenoyl-CoA + AMP + diphosphate. Functionally, catalyzes the conversion of long-chain fatty acids to their active form acyl-CoAs for both synthesis of cellular lipids, and degradation via beta-oxidation. ACSL5 may sensitize epithelial cells to apoptosis specifically triggered by the death ligand TRAIL at the villus tip of the crypt-villus axis of the small intestine. May have a role in the survival of glioma cells. May activate fatty acids from exogenous sources for the synthesis of triacylglycerol destined for intracellular storage. It was suggested that it may also stimulate fatty acid oxidation. Utilizes a wide range of saturated fatty acids with a preference for C16-C18 unsaturated fatty acids. The chain is Long-chain-fatty-acid--CoA ligase 5 from Rattus norvegicus (Rat).